We begin with the raw amino-acid sequence, 140 residues long: Large ribosomal subunit protein uL11 (140 aa).

This sequence belongs to the universal ribosomal protein uL11 family. As to quaternary structure, part of the ribosomal stalk of the 50S ribosomal subunit. Interacts with L10 and the large rRNA to form the base of the stalk. L10 forms an elongated spine to which L12 dimers bind in a sequential fashion forming a multimeric L10(L12)X complex. One or more lysine residues are methylated.

In terms of biological role, forms part of the ribosomal stalk which helps the ribosome interact with GTP-bound translation factors. This chain is Large ribosomal subunit protein uL11, found in Staphylococcus epidermidis (strain ATCC 35984 / DSM 28319 / BCRC 17069 / CCUG 31568 / BM 3577 / RP62A).